Consider the following 360-residue polypeptide: Phosphoserine aminotransferase (360 aa).

Arg-42 contacts L-glutamate. Residues Ala-76 to Ser-77, Trp-102, Thr-152, Asp-171, and Gln-194 contribute to the pyridoxal 5'-phosphate site. At Lys-195 the chain carries N6-(pyridoxal phosphate)lysine. Position 236–237 (Asn-236–Thr-237) interacts with pyridoxal 5'-phosphate.

Belongs to the class-V pyridoxal-phosphate-dependent aminotransferase family. SerC subfamily. In terms of assembly, homodimer. It depends on pyridoxal 5'-phosphate as a cofactor.

It localises to the cytoplasm. The catalysed reaction is O-phospho-L-serine + 2-oxoglutarate = 3-phosphooxypyruvate + L-glutamate. It carries out the reaction 4-(phosphooxy)-L-threonine + 2-oxoglutarate = (R)-3-hydroxy-2-oxo-4-phosphooxybutanoate + L-glutamate. It participates in amino-acid biosynthesis; L-serine biosynthesis; L-serine from 3-phospho-D-glycerate: step 2/3. In terms of biological role, catalyzes the reversible conversion of 3-phosphohydroxypyruvate to phosphoserine and of 3-hydroxy-2-oxo-4-phosphonooxybutanoate to phosphohydroxythreonine. The sequence is that of Phosphoserine aminotransferase from Geobacillus kaustophilus (strain HTA426).